The primary structure comprises 252 residues: Probable anguibactin biosynthesis thioesterase AngT (252 aa).

Residues Ser-92 and His-229 contribute to the active site.

This sequence belongs to the thioesterase family.

The protein operates within siderophore biosynthesis; anguibactin biosynthesis. Probable thioesterase. Involved in anguibactin production, but is not essential for virulence or iron transport gene expression. The polypeptide is Probable anguibactin biosynthesis thioesterase AngT (angT) (Vibrio anguillarum (strain ATCC 68554 / 775) (Listonella anguillarum)).